The following is an 85-amino-acid chain: Putative defensin-like protein 258 (85 aa).

The N-terminal stretch at 1–25 (MINVSLKRSLLIFISVITSNIGSEA) is a signal peptide. 3 cysteine pairs are disulfide-bonded: Cys-57/Cys-75, Cys-63/Cys-82, and Cys-67/Cys-84.

The protein belongs to the DEFL family.

Its subcellular location is the secreted. This is Putative defensin-like protein 258 from Arabidopsis thaliana (Mouse-ear cress).